An 83-amino-acid polypeptide reads, in one-letter code: Defensin-like protein 194 (83 aa).

The first 27 residues, 1–27 (MAMKSVSNFAIFLILFLVTSEISEIEA), serve as a signal peptide directing secretion. Disulfide bonds link Cys32-Cys78, Cys44-Cys68, Cys53-Cys73, and Cys57-Cys75.

This sequence belongs to the DEFL family. Protease inhibitor I18 (RTI/MTI-2) subfamily.

The protein localises to the secreted. The chain is Defensin-like protein 194 (ATTI3) from Arabidopsis thaliana (Mouse-ear cress).